Reading from the N-terminus, the 64-residue chain is MTTVKFKYKGEEKQVDTSKIKKVWRVGKMISFTYDEGGGKTGRGAVSEKDAPKELLQMLEKQKK.

Belongs to the 7 kDa DNA-binding/endoribonuclease P2 family. As to quaternary structure, monomer.

The protein resides in the cytoplasm. Its function is as follows. Can constrain negative DNA supercoils. May be involved in maintaining the integrity of the genome at high temperature. This is DNA-binding protein 7b from Saccharolobus islandicus (strain HVE10/4) (Sulfolobus islandicus).